A 65-amino-acid polypeptide reads, in one-letter code: Large ribosomal subunit protein bL35 (65 aa).

The span at 1 to 16 (MPKMKTKKSAAKRFKV) shows a compositional bias: basic residues. Residues 1-25 (MPKMKTKKSAAKRFKVRGSGSIKRG) are disordered.

Belongs to the bacterial ribosomal protein bL35 family.

In Bordetella parapertussis (strain 12822 / ATCC BAA-587 / NCTC 13253), this protein is Large ribosomal subunit protein bL35.